A 336-amino-acid polypeptide reads, in one-letter code: F420-dependent glucose-6-phosphate dehydrogenase (336 aa).

Aspartate 39 provides a ligand contact to coenzyme F420-(gamma-Glu)n. Residue histidine 40 is the Proton donor of the active site. Coenzyme F420-(gamma-Glu)n contacts are provided by residues threonine 76 and 107–108 (TG). Glutamate 109 functions as the Proton acceptor in the catalytic mechanism. Coenzyme F420-(gamma-Glu)n is bound by residues asparagine 112, 177–178 (GG), and 180–181 (VV). Positions 195, 198, 259, and 283 each coordinate substrate.

This sequence belongs to the F420-dependent glucose-6-phosphate dehydrogenase family. Homodimer.

The enzyme catalyses oxidized coenzyme F420-(gamma-L-Glu)(n) + D-glucose 6-phosphate + H(+) = 6-phospho-D-glucono-1,5-lactone + reduced coenzyme F420-(gamma-L-Glu)(n). Functionally, catalyzes the coenzyme F420-dependent oxidation of glucose 6-phosphate (G6P) to 6-phosphogluconolactone. Appears to have a role in resistance to oxidative stress, via its consumption of G6P that serves as a source of reducing power to combat oxidative stress in mycobacteria. Cannot use NAD, NADP, FAD or FMN instead of coenzyme F420 as an electron acceptor. Exhibits nearly no activity with D-mannose-6-phosphate or D-fructose-6-phosphate as substrate. This is F420-dependent glucose-6-phosphate dehydrogenase (fgd) from Mycolicibacterium smegmatis (strain ATCC 700084 / mc(2)155) (Mycobacterium smegmatis).